The sequence spans 141 residues: Large ribosomal subunit protein uL14m (141 aa).

A mitochondrion-targeting transit peptide spans 1-19; it reads MALSLSGLILPKLMQQRAF.

It belongs to the universal ribosomal protein uL14 family. As to quaternary structure, component of the mitochondrial ribosome large subunit (39S) which comprises a 16S rRNA and about 50 distinct proteins. Interacts with MALSU1.

It is found in the mitochondrion. Functionally, may form part of 2 intersubunit bridges in the assembled ribosome. Upon binding to MALSU1, intersubunit bridge formation is blocked, preventing ribosome formation and repressing translation. This Danio rerio (Zebrafish) protein is Large ribosomal subunit protein uL14m (mrpl14).